The sequence spans 425 residues: Enolase (425 aa).

Glutamine 164 serves as a coordination point for (2R)-2-phosphoglycerate. Residue glutamate 208 is the Proton donor of the active site. Aspartate 243, glutamate 286, and aspartate 312 together coordinate Mg(2+). Residues lysine 337, arginine 366, serine 367, and lysine 388 each coordinate (2R)-2-phosphoglycerate. Lysine 337 serves as the catalytic Proton acceptor.

This sequence belongs to the enolase family. Requires Mg(2+) as cofactor.

It is found in the cytoplasm. It localises to the secreted. The protein resides in the cell surface. It carries out the reaction (2R)-2-phosphoglycerate = phosphoenolpyruvate + H2O. The protein operates within carbohydrate degradation; glycolysis; pyruvate from D-glyceraldehyde 3-phosphate: step 4/5. In terms of biological role, catalyzes the reversible conversion of 2-phosphoglycerate (2-PG) into phosphoenolpyruvate (PEP). It is essential for the degradation of carbohydrates via glycolysis. This chain is Enolase, found in Methanococcus aeolicus (strain ATCC BAA-1280 / DSM 17508 / OCM 812 / Nankai-3).